Consider the following 243-residue polypeptide: CTD nuclear envelope phosphatase 1 homolog (243 aa).

The chain crosses the membrane as a helical span at residues 11–27 (ALLLLLSKVWTCICFMF). The FCP1 homology domain maps to 56–223 (SLVQRKTLVL…LSLLPMLDAL (168 aa)).

It belongs to the dullard family.

It is found in the membrane. The catalysed reaction is O-phospho-L-seryl-[protein] + H2O = L-seryl-[protein] + phosphate. It carries out the reaction O-phospho-L-threonyl-[protein] + H2O = L-threonyl-[protein] + phosphate. In terms of biological role, serine/threonine protein phosphatase that may dephosphorylate and activate lipin-like phosphatases. Lipins are phosphatidate phosphatases that catalyze the conversion of phosphatidic acid to diacylglycerol and control the metabolism of fatty acids at different levels. May indirectly modulate the lipid composition of nuclear and/or endoplasmic reticulum membranes and be required for proper nuclear membrane morphology and/or dynamics. May also indirectly regulate the production of lipid droplets and triacylglycerol. This chain is CTD nuclear envelope phosphatase 1 homolog (Dd), found in Drosophila melanogaster (Fruit fly).